Consider the following 450-residue polypeptide: LanC-like protein 2 (450 aa).

Gly-2 carries N-myristoyl glycine lipidation. An interaction with inositol phospholipids region spans residues 2–15 (GETMSKRLKLHLGG). Tyr-198 carries the post-translational modification Phosphotyrosine.

Belongs to the LanC-like protein family. Interacts with an array of inositol phospholipids such as phosphatidylinositol 3-phosphate (PI3P), phosphatidylinositol 4-phosphate (PI4P) and phosphatidylinositol 5-phosphate (PI5P). PIP-binding enhances membrane association. In terms of processing, myristoylated. Essential for membrane association. Expressed in brain and testis.

It localises to the nucleus. The protein resides in the cytoplasm. It is found in the cell membrane. Functionally, necessary for abscisic acid (ABA) binding on the cell membrane and activation of the ABA signaling pathway in granulocytes. In Homo sapiens (Human), this protein is LanC-like protein 2 (LANCL2).